Reading from the N-terminus, the 355-residue chain is Uroporphyrinogen decarboxylase (355 aa).

Substrate contacts are provided by residues 27–31 (RQAGR), Asp-77, Tyr-154, Thr-209, and His-328.

Belongs to the uroporphyrinogen decarboxylase family. Homodimer.

The protein resides in the cytoplasm. It carries out the reaction uroporphyrinogen III + 4 H(+) = coproporphyrinogen III + 4 CO2. It functions in the pathway porphyrin-containing compound metabolism; protoporphyrin-IX biosynthesis; coproporphyrinogen-III from 5-aminolevulinate: step 4/4. Catalyzes the decarboxylation of four acetate groups of uroporphyrinogen-III to yield coproporphyrinogen-III. This chain is Uroporphyrinogen decarboxylase, found in Colwellia psychrerythraea (strain 34H / ATCC BAA-681) (Vibrio psychroerythus).